Consider the following 999-residue polypeptide: Sarcoplasmic/endoplasmic reticulum calcium ATPase 3 (999 aa).

Position 1 is an N-acetylmethionine (Met-1). The Cytoplasmic segment spans residues 1 to 48 (MEEAHLLSAADVLRRFSVTAEGGLTLEQVTDARERYGPNELPTEEGKS). Ser-17 is modified (phosphoserine). Thr-19 carries the post-translational modification Phosphothreonine. A helical membrane pass occupies residues 49–69 (LWELVVEQFEDLLVRILLLAA). The Lumenal portion of the chain corresponds to 70–89 (LVSFVLAWFEEGEETTTAFV). A helical membrane pass occupies residues 90–110 (EPLVIMLILVANAIVGVWQER). Topologically, residues 111-253 (NAESAIEALK…PERTPLQRKL (143 aa)) are cytoplasmic. A helical transmembrane segment spans residues 254-273 (DEFGRQLSHAISVICVAVWV). The Lumenal segment spans residues 274 to 295 (INIGHFADPAHGGSWLRGAVYY). The chain crosses the membrane as a helical span at residues 296–313 (FKIAVALAVAAIPEGLPA). 4 residues coordinate Ca(2+): Val-304, Ala-305, Ile-307, and Glu-309. The Cytoplasmic portion of the chain corresponds to 314 to 757 (VITTCLALGT…EEGRAIYNNM (444 aa)). Residue Asp-351 is the 4-aspartylphosphate intermediate of the active site. Residues Asp-351 and Thr-353 each contribute to the Mg(2+) site. Thr-353 is an ATP binding site. Positions 370–400 (AEAEAGACRLHEFTISGTTYTPEGEVRQGEQ) are interaction with phospholamban 1. Phosphothreonine is present on Thr-415. Residues Glu-442, Arg-489, Lys-515, Arg-560, Thr-625, Gly-626, and Asp-627 each coordinate ATP. Residue Ser-662 is modified to Phosphoserine. Residues Arg-678 and Lys-684 each coordinate ATP. Asp-703 provides a ligand contact to Mg(2+). Asn-706 is an ATP binding site. A helical membrane pass occupies residues 758–777 (KQFIRYLISSNVGEVVCIFL). Asn-768 and Glu-771 together coordinate Ca(2+). Residues 778-787 (TAILGLPEAL) are Lumenal-facing. Residues 788–808 (IPVQLLWVNLVTDGLPATALG) traverse the membrane as a helical segment. An interaction with phospholamban 2 region spans residues 788 to 808 (IPVQLLWVNLVTDGLPATALG). 3 residues coordinate Ca(2+): Asn-796, Thr-799, and Asp-800. Residues 809 to 828 (FNPPDLDIMEKLPRNPREAL) are Cytoplasmic-facing. Residues 829–851 (ISGWLFFRYLAIGVYVGLATVAA) traverse the membrane as a helical segment. The Lumenal portion of the chain corresponds to 852 to 897 (ATWWFLYDAEGPQVTFHQLRNFLKCSEDNPLFAGIDCEVFESRFPT). A helical transmembrane segment spans residues 898–917 (TMALSVLVTIEMCNALNSVS). Glu-908 provides a ligand contact to Ca(2+). Residues 918 to 930 (ENQSLLRMPPWLN) are Cytoplasmic-facing. A helical transmembrane segment spans residues 931–949 (PWLLGAVVMSMALHFLILL). The Lumenal portion of the chain corresponds to 950-964 (VPPLPLIFQVTPLSG). A helical transmembrane segment spans residues 965–985 (RQWGVVLQMSLPVILLDEALK). The Cytoplasmic portion of the chain corresponds to 986-999 (YLSRHHVDEKKDLK).

It belongs to the cation transport ATPase (P-type) (TC 3.A.3) family. Type IIA subfamily. In terms of assembly, interacts with sarcolipin (SLN). Interacts with phospholamban (PLN). Interacts with myoregulin (MRLN). Interacts with DWORF. Interacts with VMP1. Interacts with TUNAR; the interaction occurs at low levels in low glucose conditions and is increased by high glucose levels. Mg(2+) serves as cofactor. In terms of tissue distribution, found in most tissues. Most abundant in large and small intestine, spleen and lung. Also detected in PC12 cells.

The protein localises to the endoplasmic reticulum membrane. Its subcellular location is the sarcoplasmic reticulum membrane. It carries out the reaction Ca(2+)(in) + ATP + H2O = Ca(2+)(out) + ADP + phosphate + H(+). Inhibited by sarcolipin (SLN), phospholamban (PLN) and myoregulin (MRLN). Enhanced by DWORF; DWORF increases activity by displacing sarcolipin (SLN), phospholamban (PLN) and myoregulin (MRLN). Functionally, this magnesium-dependent enzyme catalyzes the hydrolysis of ATP coupled with the transport of the calcium. Transports calcium ions from the cytosol into the sarcoplasmic/endoplasmic reticulum lumen. Contributes to calcium sequestration involved in muscular excitation/contraction. In terms of biological role, this magnesium-dependent enzyme catalyzes the hydrolysis of ATP coupled with the transport of calcium. Transports calcium ions from the cytosol into the sarcoplasmic/endoplasmic reticulum lumen. Contributes to calcium sequestration involved in muscular excitation/contraction. This Rattus norvegicus (Rat) protein is Sarcoplasmic/endoplasmic reticulum calcium ATPase 3 (Atp2a3).